Reading from the N-terminus, the 194-residue chain is uncharacterized protein (194 aa).

The interval 45-138 (QLLGVPEQHR…AGPPRGDWGV (94 aa)) is disordered. Serine 69 and serine 76 each carry phosphoserine. Residues 97–106 (PPLPPPPVLP) show a composition bias toward pro residues. Positions 107-116 (GPGEELPGAR) are enriched in low complexity. Residues 117–128 (LPGGGGDDGAGR) are compositionally biased toward gly residues.

This is an uncharacterized protein from Homo sapiens (Human).